Here is a 250-residue protein sequence, read N- to C-terminus: Petrobactin import ATP-binding protein FatE (250 aa).

An ABC transporter domain is found at I2–R236. G34 to S41 contributes to the ATP binding site.

The protein belongs to the ABC transporter superfamily. As to quaternary structure, the complex is composed of two ATP-binding proteins (FatE), two transmembrane proteins (FatC and FatD) and a solute-binding protein (FpuA).

The protein localises to the cell membrane. It carries out the reaction a Fe(III)-siderophore(out) + ATP + H2O = a Fe(III)-siderophore(in) + ADP + phosphate + H(+). Its function is as follows. Part of an ABC transporter complex involved in ferric-petrobactin uptake. Probably responsible for energy coupling to the transport system. This Bacillus anthracis protein is Petrobactin import ATP-binding protein FatE.